The following is a 268-amino-acid chain: Chymotrypsin-C (268 aa).

The first 16 residues, 1–16 (MLGITVFTTFLAYASS), serve as a signal peptide directing secretion. A propeptide spans 17–29 (CGAPIFQPNLSAR) (activation peptide). 5 cysteine pairs are disulfide-bonded: Cys-17–Cys-141, Cys-59–Cys-75, Cys-155–Cys-222, Cys-186–Cys-202, and Cys-212–Cys-243. Asn-25 carries an N-linked (GlcNAc...) asparagine glycan. A Peptidase S1 domain is found at 30 to 268 (VVGGEDAIPH…IDWINQKLQL (239 aa)). Active-site charge relay system residues include His-74 and Asp-121. The active-site Charge relay system is Ser-216.

This sequence belongs to the peptidase S1 family. Elastase subfamily. As to quaternary structure, monomer. The zymogen is secreted as a ternary complex composed of procarboxypeptidase A, chymotrypsinogen C and proproteinase E. As to expression, pancreas.

It is found in the secreted. It localises to the extracellular space. It catalyses the reaction Preferential cleavage: Leu-|-Xaa, Tyr-|-Xaa, Phe-|-Xaa, Met-|-Xaa, Trp-|-Xaa, Gln-|-Xaa, Asn-|-Xaa.. Regulates activation and degradation of trypsinogens and procarboxypeptidases by targeting specific cleavage sites within their zymogen precursors. Has chymotrypsin-type protease activity and hypocalcemic activity. This Bos taurus (Bovine) protein is Chymotrypsin-C (CTRC).